Reading from the N-terminus, the 65-residue chain is UPF0434 protein PSHAa1659 (65 aa).

This sequence belongs to the UPF0434 family.

This chain is UPF0434 protein PSHAa1659, found in Pseudoalteromonas translucida (strain TAC 125).